We begin with the raw amino-acid sequence, 212 residues long: Neuroendocrine protein 7B2 (212 aa).

Residues 1–26 form the signal peptide; sequence MVSRMVSTMLSGLLFWLASGWTPAFA. Cys-120 and Cys-130 are disulfide-bonded. Residues Ser-141 and Ser-205 each carry the phosphoserine modification. The tract at residues 174–212 is disordered; it reads GGERRKRRSVNPYLQGQRLDNVVAKKSVPHFSDEDKDPE.

Belongs to the 7B2 family. In terms of assembly, interacts with PCSK2/PC2 early in the secretory pathway. Dissociation occurs at later stages. In terms of processing, proteolytically cleaved in the Golgi by a furin-like convertase to generate bioactive peptides. Post-translationally, sulfated on tyrosine residues.

It is found in the secreted. In terms of biological role, acts as a molecular chaperone for PCSK2/PC2, preventing its premature activation in the regulated secretory pathway. Binds to inactive PCSK2 in the endoplasmic reticulum and facilitates its transport from there to later compartments of the secretory pathway where it is proteolytically matured and activated. Also required for cleavage of PCSK2 but does not appear to be involved in its folding. Plays a role in regulating pituitary hormone secretion. The C-terminal peptide inhibits PCSK2 in vitro. The chain is Neuroendocrine protein 7B2 (SCG5) from Homo sapiens (Human).